Here is a 504-residue protein sequence, read N- to C-terminus: Maturase K (504 aa).

It belongs to the intron maturase 2 family. MatK subfamily.

It is found in the plastid. It localises to the chloroplast. In terms of biological role, usually encoded in the trnK tRNA gene intron. Probably assists in splicing its own and other chloroplast group II introns. This is Maturase K from Adansonia digitata (Baobab tree).